The chain runs to 495 residues: Keratin, type II cuticular 87 (495 aa).

Positions 1 to 111 (MSCFSSRLGA…PNAQCVKHEE (111 aa)) are head. In terms of domain architecture, IF rod spans 111–422 (EKEQIKCLNS…RLLEGEEQRL (312 aa)). The segment at 112–146 (KEQIKCLNSKFAAFIDKVRFLEQQNKLLETKWQFY) is coil 1A. The interval 147-156 (QNRKCCESNM) is linker 1. Residues 157 to 257 (EPLFEGYIEA…YEEETRLLHS (101 aa)) form a coil 1B region. A linker 12 region spans residues 258–274 (HISDTSVVVKMDNSRDL). The tract at residues 275 to 418 (NMDCVVAEIK…ITYRRLLEGE (144 aa)) is coil 2. Residues 419–494 (EQRLCEGVGS…TCGSSRSVRF (76 aa)) are tail.

This sequence belongs to the intermediate filament family. In terms of assembly, heterotetramer of two type I and two type II keratins.

This chain is Keratin, type II cuticular 87, found in Mus musculus (Mouse).